Here is a 188-residue protein sequence, read N- to C-terminus: Elongation factor P (188 aa).

Belongs to the elongation factor P family.

Its subcellular location is the cytoplasm. Its pathway is protein biosynthesis; polypeptide chain elongation. Involved in peptide bond synthesis. Stimulates efficient translation and peptide-bond synthesis on native or reconstituted 70S ribosomes in vitro. Probably functions indirectly by altering the affinity of the ribosome for aminoacyl-tRNA, thus increasing their reactivity as acceptors for peptidyl transferase. The protein is Elongation factor P of Chloroherpeton thalassium (strain ATCC 35110 / GB-78).